Here is a 276-residue protein sequence, read N- to C-terminus: Ammonia monooxygenase alpha subunit (276 aa).

5 helical membrane passes run Val29–Leu49, Pro66–Val86, Leu96–Trp116, Phe123–Thr143, and Ala150–Gly170. Residues Asp187, His191, and His204 each coordinate Cu(+). The helical transmembrane segment at Val219–Leu239 threads the bilayer.

The soluble ammonia monooxygenase is a nonamer composed of three alpha subunits (AmoA), three beta subunits (AmoB) and three gamma subunits (Cytochrome c1 PetC). Cu(+) serves as cofactor.

The protein resides in the cell membrane. Its subcellular location is the cytoplasm. The catalysed reaction is AH2 + NH4(+) + O2 = hydroxylamine + A + H2O + H(+). With respect to regulation, in vitro, inhibited by acetylene. In fact, acetylene is oxidized to ketene which binds irreversibly to His-191 of ammonia monooxygenase alpha subunit (AmoA). Its function is as follows. Part of the ammonia monooxygenase complex, which catalyzes the oxidation of ammonia to hydroxylamine, the first reaction in the process of ammonia oxidation to nitrite. The sequence is that of Ammonia monooxygenase alpha subunit from Nitrosomonas europaea (strain ATCC 19718 / CIP 103999 / KCTC 2705 / NBRC 14298).